A 266-amino-acid polypeptide reads, in one-letter code: Biotin--[acetyl-CoA-carboxylase] ligase (266 aa).

Residues 14-202 (RSLRDQLIGA…ELEARIIQWR (189 aa)) form the BPL/LPL catalytic domain. Residues 38–39 (ST), Gln63, Arg67, and Lys138 each bind biotin.

It belongs to the biotin--protein ligase family. In terms of assembly, monomer in solution. Forms dimers under specific crystallization conditions.

It carries out the reaction biotin + L-lysyl-[protein] + ATP = N(6)-biotinyl-L-lysyl-[protein] + AMP + diphosphate + H(+). It catalyses the reaction biotin + ATP + H(+) = biotinyl-5'-AMP + diphosphate. The enzyme catalyses biotinyl-5'-AMP + L-lysyl-[protein] = N(6)-biotinyl-L-lysyl-[protein] + AMP + 2 H(+). Binding of biotin and ATP significantly increases the thermal stability of BirA and leads to the formation of a high affinity holoenzyme complex. Its function is as follows. Catalyzes the transfer of biotin onto a conserved lysine residue of the biotin carboxyl carrier protein (BCCP) domain of acetyl-CoA carboxylase and converts it to active holo-BCCP. Forms an acyl-adenylate intermediate. Cannot use GTP or desthiobiotin. This Mycobacterium tuberculosis (strain ATCC 25618 / H37Rv) protein is Biotin--[acetyl-CoA-carboxylase] ligase.